We begin with the raw amino-acid sequence, 96 residues long: MTNPHDIIIKPVVTENSMMEMAEKKYTFVVAKKANKIEIKKAVEKIFDVKVEKVNTMNMIGKMKRMGKHIGRRSNWKKAVVTLTDGSKGIEFFEGM.

This sequence belongs to the universal ribosomal protein uL23 family. As to quaternary structure, part of the 50S ribosomal subunit. Contacts protein L29, and trigger factor when it is bound to the ribosome.

Its function is as follows. One of the early assembly proteins it binds 23S rRNA. One of the proteins that surrounds the polypeptide exit tunnel on the outside of the ribosome. Forms the main docking site for trigger factor binding to the ribosome. The sequence is that of Large ribosomal subunit protein uL23 from Alkaliphilus metalliredigens (strain QYMF).